Reading from the N-terminus, the 924-residue chain is DNA repair and recombination protein RDH54 (924 aa).

Residues 1-10 (MQIPKYENKP) are compositionally biased toward basic and acidic residues. Disordered stretches follow at residues 1–21 (MQIPKYENKPFKPPRRVGSNK) and 155–183 (EALSQNMGNPNPPTTSTTETVPSTKNDGG). Positions 168–178 (TTSTTETVPST) are enriched in low complexity. Residues 299-487 (LENDSDISGC…FTIIDFINPG (189 aa)) form the Helicase ATP-binding domain. 346-353 (IPLTGLCK) contacts ATP. The DEGH box signature appears at 472–475 (NDLN). Lys-615 participates in a covalent cross-link: Glycyl lysine isopeptide (Lys-Gly) (interchain with G-Cter in ubiquitin). One can recognise a Helicase C-terminal domain in the interval 631–790 (KLRVLMTLLE…DSEMRNKESS (160 aa)).

It belongs to the SNF2/RAD54 helicase family. In terms of assembly, interacts with RAD51 and DMC1.

It is found in the nucleus. The enzyme catalyses ATP + H2O = ADP + phosphate + H(+). Involved in the recombinational repair of double-strand breaks (DSB) in DNA during mitosis and meiosis. Has DNA dependent ATPase activity. Promotes D-loop (displacement loop) formation with RAD51 recombinase. Modifies the topology of double-stranded DNA during the D-loop reaction to facilitate the invasion of the homologous duplex molecule by the initiating single-stranded DNA substrate. Required for adaptation from G2/M checkpoint arrest induced by a double strand break, by participating in monitoring the extent of single-stranded DNA produced by resection of DNA ends. This role is distinct from its roles in recombination. Promotes colocalization of RAD51 and DMC1 during meiotic recombination. Involved in crossover interference. The chain is DNA repair and recombination protein RDH54 (RDH54) from Saccharomyces cerevisiae (strain YJM789) (Baker's yeast).